Consider the following 121-residue polypeptide: MARIAGVDLPRGKQIVIALTYIYGVGKTTAQKVLKNAGVPENVRQDDLTPEQEDKIRAALDSVKVEGDLRREVNLNIKRLMEIGSYRGIRHRRGLPVRGQNTKNNARTRKGKKASMAGKKK.

The tract at residues 91-121 (HRRGLPVRGQNTKNNARTRKGKKASMAGKKK) is disordered. The segment covering 106 to 121 (ARTRKGKKASMAGKKK) has biased composition (basic residues).

Belongs to the universal ribosomal protein uS13 family. As to quaternary structure, part of the 30S ribosomal subunit. Forms a loose heterodimer with protein S19. Forms two bridges to the 50S subunit in the 70S ribosome.

In terms of biological role, located at the top of the head of the 30S subunit, it contacts several helices of the 16S rRNA. In the 70S ribosome it contacts the 23S rRNA (bridge B1a) and protein L5 of the 50S subunit (bridge B1b), connecting the 2 subunits; these bridges are implicated in subunit movement. Contacts the tRNAs in the A and P-sites. The polypeptide is Small ribosomal subunit protein uS13 (Lacticaseibacillus paracasei (strain ATCC 334 / BCRC 17002 / CCUG 31169 / CIP 107868 / KCTC 3260 / NRRL B-441) (Lactobacillus paracasei)).